We begin with the raw amino-acid sequence, 735 residues long: Cyclic nucleotide-gated channel cone photoreceptor subunit alpha (735 aa).

The Cytoplasmic portion of the chain corresponds to 1 to 214 (MAKINTQHSY…PSSNMYYNWL (214 aa)). A disordered region spans residues 142–191 (VNFSNNTNEDKKEEKKEVKEEKKEEKKEEKKEEKKDDKKDDKKDDKKDDK). Residues 149 to 191 (NEDKKEEKKEVKEEKKEEKKEEKKEEKKDDKKDDKKDDKKDDK) show a composition bias toward basic and acidic residues. Residues 215-236 (TIIAAPVFYNWCMLICRACFDE) traverse the membrane as a helical segment. The Extracellular portion of the chain corresponds to 237-246 (LQIDHIKLWL). The chain crosses the membrane as a helical span at residues 247–267 (FLDYCSDIIYVFDMFVRFRTG). At 268 to 292 (FLEQGLLVKDEKKLRDHYTQTVQFK) the chain is on the cytoplasmic side. The chain crosses the membrane as a helical span at residues 293 to 311 (LDVLSLLPTDLAYLKLGLN). Over 312-316 (YPELR) the chain is Extracellular. Residues 317-335 (FNRLLRIARLFEFFDRTET) traverse the membrane as a helical segment. Residues 336–342 (RTNYPNM) lie on the Cytoplasmic side of the membrane. Residues 343–366 (FRIGNLVLYILIIIHWNACIYFAI) form a helical membrane-spanning segment. Topologically, residues 367–389 (SKVIGFGTDSWVYPNVSIPEYGR) are extracellular. The next 2 helical transmembrane spans lie at 390–424 (LSRKYIYSLYWSTLTLTTIGETPPPVKDEEYLFVV) and 425–449 (IDFLVGVLIFATIVGNVGSMISNMN). Residues 450–735 (ASRAEFQAKV…PEKPEEQKKD (286 aa)) lie on the Cytoplasmic side of the membrane. 3',5'-cyclic GMP-binding positions include 532-654 (LLIE…DNLI), Glu-591, and Arg-606. The segment at 715–735 (GSGSLSVGEPEPEKPEEQKKD) is disordered. Residues 725–735 (EPEKPEEQKKD) show a composition bias toward basic and acidic residues.

The protein belongs to the cyclic nucleotide-gated cation channel (TC 1.A.1.5) family.

It is found in the membrane. Visual signal transduction is mediated by a G-protein coupled cascade using cGMP as second messenger. This protein can be activated by cyclic GMP which leads to an opening of the cation channel and thereby causing a depolarization of cone photoreceptors. This chain is Cyclic nucleotide-gated channel cone photoreceptor subunit alpha, found in Gallus gallus (Chicken).